The primary structure comprises 62 residues: Beta-defensin 110 (62 aa).

A signal peptide spans 1–21 (MKIHLFFFILLFWVTILPARS). Disulfide bonds link cysteine 32–cysteine 60, cysteine 39–cysteine 53, and cysteine 43–cysteine 61.

Belongs to the beta-defensin family.

Its subcellular location is the secreted. Its function is as follows. Has antibacterial activity. The polypeptide is Beta-defensin 110 (DEFB110) (Canis lupus familiaris (Dog)).